The following is a 458-amino-acid chain: Bifunctional protein GlmU (458 aa).

Residues 1–230 are pyrophosphorylase; it reads MSLPTYSKLN…EWQVAGINSK (230 aa). UDP-N-acetyl-alpha-D-glucosamine is bound by residues 14-17, Lys-28, Gln-79, and 84-85; these read LAAG and GT. Mg(2+) is bound at residue Asp-108. Residues Gly-141, Glu-155, Asn-170, and Asn-228 each coordinate UDP-N-acetyl-alpha-D-glucosamine. Asn-228 is a Mg(2+) binding site. Positions 231–251 are linker; that stretch reads QDLAALERVYQGRYAARLLAK. Positions 252-458 are N-acetyltransferase; the sequence is GVTLADPSRI…NWKRPEKVKK (207 aa). UDP-N-acetyl-alpha-D-glucosamine contacts are provided by Arg-334 and Lys-352. Residue His-364 is the Proton acceptor of the active site. The UDP-N-acetyl-alpha-D-glucosamine site is built by Tyr-367 and Asn-378. Residues Ala-381, 387–388, Ser-406, Ala-424, and Arg-441 each bind acetyl-CoA; that span reads NY.

This sequence in the N-terminal section; belongs to the N-acetylglucosamine-1-phosphate uridyltransferase family. In the C-terminal section; belongs to the transferase hexapeptide repeat family. In terms of assembly, homotrimer. Requires Mg(2+) as cofactor.

Its subcellular location is the cytoplasm. It carries out the reaction alpha-D-glucosamine 1-phosphate + acetyl-CoA = N-acetyl-alpha-D-glucosamine 1-phosphate + CoA + H(+). The catalysed reaction is N-acetyl-alpha-D-glucosamine 1-phosphate + UTP + H(+) = UDP-N-acetyl-alpha-D-glucosamine + diphosphate. Its pathway is nucleotide-sugar biosynthesis; UDP-N-acetyl-alpha-D-glucosamine biosynthesis; N-acetyl-alpha-D-glucosamine 1-phosphate from alpha-D-glucosamine 6-phosphate (route II): step 2/2. The protein operates within nucleotide-sugar biosynthesis; UDP-N-acetyl-alpha-D-glucosamine biosynthesis; UDP-N-acetyl-alpha-D-glucosamine from N-acetyl-alpha-D-glucosamine 1-phosphate: step 1/1. It participates in bacterial outer membrane biogenesis; LPS lipid A biosynthesis. Its function is as follows. Catalyzes the last two sequential reactions in the de novo biosynthetic pathway for UDP-N-acetylglucosamine (UDP-GlcNAc). The C-terminal domain catalyzes the transfer of acetyl group from acetyl coenzyme A to glucosamine-1-phosphate (GlcN-1-P) to produce N-acetylglucosamine-1-phosphate (GlcNAc-1-P), which is converted into UDP-GlcNAc by the transfer of uridine 5-monophosphate (from uridine 5-triphosphate), a reaction catalyzed by the N-terminal domain. The polypeptide is Bifunctional protein GlmU (Methylobacillus flagellatus (strain ATCC 51484 / DSM 6875 / VKM B-1610 / KT)).